The chain runs to 290 residues: Appressorium protein ROW2 (290 aa).

Positions 1–19 are cleaved as a signal peptide; that stretch reads MFTKSVFIALVAGVLGVTA. Positions 266–290 are disordered; that stretch reads AIKTPSKRSVMATHVKRSPEWEEEP.

The protein resides in the secreted. The protein localises to the nucleus. Plays a role in the formation of the appressorium, a specialized infection structure with the purpose of penetrating the host surface, and is required for proper remodeling of the appressorium wall and vesicle secretion. This is Appressorium protein ROW2 from Mycosarcoma maydis (Corn smut fungus).